The primary structure comprises 259 residues: Thiazole synthase (259 aa).

Lys98 functions as the Schiff-base intermediate with DXP in the catalytic mechanism. Residues Gly159, 185–186 (AG), and 207–208 (NS) each bind 1-deoxy-D-xylulose 5-phosphate.

This sequence belongs to the ThiG family. Homotetramer. Forms heterodimers with either ThiH or ThiS.

Its subcellular location is the cytoplasm. The enzyme catalyses [ThiS sulfur-carrier protein]-C-terminal-Gly-aminoethanethioate + 2-iminoacetate + 1-deoxy-D-xylulose 5-phosphate = [ThiS sulfur-carrier protein]-C-terminal Gly-Gly + 2-[(2R,5Z)-2-carboxy-4-methylthiazol-5(2H)-ylidene]ethyl phosphate + 2 H2O + H(+). It functions in the pathway cofactor biosynthesis; thiamine diphosphate biosynthesis. Its function is as follows. Catalyzes the rearrangement of 1-deoxy-D-xylulose 5-phosphate (DXP) to produce the thiazole phosphate moiety of thiamine. Sulfur is provided by the thiocarboxylate moiety of the carrier protein ThiS. In vitro, sulfur can be provided by H(2)S. The protein is Thiazole synthase of Chlorobium phaeobacteroides (strain BS1).